The sequence spans 716 residues: uncharacterized protein (716 aa).

Disordered stretches follow at residues 84–103 (SPSI…ERYP) and 153–189 (VTDE…SQTQ). Ser-97 carries the phosphoserine modification. Glycyl lysine isopeptide (Lys-Gly) (interchain with G-Cter in SUMO2) cross-links involve residues Lys-201, Lys-204, Lys-237, Lys-283, and Lys-626.

This is an uncharacterized protein from Homo sapiens (Human).